Here is a 368-residue protein sequence, read N- to C-terminus: tRNA-specific 2-thiouridylase MnmA (368 aa).

ATP contacts are provided by residues G12 to S19 and M38. The interaction with target base in tRNA stretch occupies residues N98–D100. C103 functions as the Nucleophile in the catalytic mechanism. C103 and C200 form a disulfide bridge. G128 is a binding site for ATP. Residues K150–Q152 are interaction with tRNA. C200 functions as the Cysteine persulfide intermediate in the catalytic mechanism. The interval R311–Y312 is interaction with tRNA.

This sequence belongs to the MnmA/TRMU family.

The protein resides in the cytoplasm. The enzyme catalyses S-sulfanyl-L-cysteinyl-[protein] + uridine(34) in tRNA + AH2 + ATP = 2-thiouridine(34) in tRNA + L-cysteinyl-[protein] + A + AMP + diphosphate + H(+). Catalyzes the 2-thiolation of uridine at the wobble position (U34) of tRNA, leading to the formation of s(2)U34. This Aeromonas salmonicida (strain A449) protein is tRNA-specific 2-thiouridylase MnmA.